The following is a 406-amino-acid chain: 12S rRNA N(4)-cytidine methyltransferase METTL15 (406 aa).

A mitochondrion-targeting transit peptide spans 1–22; sequence MLRYPYFYRTYNRLFSHFVDSG. Residues 100-102, aspartate 119, phenylalanine 146, aspartate 169, and glutamine 176 contribute to the S-adenosyl-L-methionine site; that span reads GGH. Phosphoserine is present on serine 358.

It belongs to the methyltransferase superfamily. RsmH family.

Its subcellular location is the mitochondrion matrix. It catalyses the reaction cytidine(839) in 12S rRNA + S-adenosyl-L-methionine = N(4)-methylcytidine(839) in 12S rRNA + S-adenosyl-L-homocysteine + H(+). Its function is as follows. N4-methylcytidine (m4C) methyltransferase responsible for the methylation of position C839 in mitochondrial 12S rRNA. Involved in the stabilization of 12S rRNA folding, therefore facilitating the assembly of the mitochondrial small ribosomal subunits. The sequence is that of 12S rRNA N(4)-cytidine methyltransferase METTL15 from Mus musculus (Mouse).